Here is a 126-residue protein sequence, read N- to C-terminus: Prefoldin subunit beta (126 aa).

The protein belongs to the prefoldin subunit beta family. In terms of assembly, heterohexamer of two alpha and four beta subunits.

The protein resides in the cytoplasm. In terms of biological role, molecular chaperone capable of stabilizing a range of proteins. Seems to fulfill an ATP-independent, HSP70-like function in archaeal de novo protein folding. This Saccharolobus islandicus (strain Y.N.15.51 / Yellowstone #2) (Sulfolobus islandicus) protein is Prefoldin subunit beta.